A 273-amino-acid chain; its full sequence is Ethanolamine ammonia-lyase small subunit (273 aa).

Residues valine 164, glutamate 185, and cysteine 214 each contribute to the adenosylcob(III)alamin site.

It belongs to the EutC family. In terms of assembly, the basic unit is a heterodimer which dimerizes to form tetramers. The heterotetramers trimerize; 6 large subunits form a core ring with 6 small subunits projecting outwards. Requires adenosylcob(III)alamin as cofactor.

It is found in the bacterial microcompartment. The catalysed reaction is ethanolamine = acetaldehyde + NH4(+). The protein operates within amine and polyamine degradation; ethanolamine degradation. Its function is as follows. Catalyzes the deamination of various vicinal amino-alcohols to oxo compounds. Allows this organism to utilize ethanolamine as the sole source of nitrogen and carbon in the presence of external vitamin B12. In Pseudomonas aeruginosa (strain UCBPP-PA14), this protein is Ethanolamine ammonia-lyase small subunit.